We begin with the raw amino-acid sequence, 223 residues long: Transcriptional regulator HMO1 (223 aa).

2 disordered regions span residues 69-89 (IEAT…APKK) and 165-223 (DGSA…HGSP). Over residues 70-86 (EATESKKKRKQEKDPNA) the composition is skewed to basic and acidic residues. Positions 87–160 (PKKPLTMFFQ…IYNIEKKKYE (74 aa)) form a DNA-binding region, HMG box. Residues 204–223 (KKKKKTEKKEKKKKSGHGSP) show a composition bias toward basic residues.

Its subcellular location is the nucleus. In terms of biological role, transcription factor that binds upstream of hexose and ergosterol metabolism, as well as cell cycle genes. Activates pseudohyphal growth. This chain is Transcriptional regulator HMO1 (HMO1), found in Candida albicans (strain SC5314 / ATCC MYA-2876) (Yeast).